We begin with the raw amino-acid sequence, 24 residues long: Unknown protein 6 (24 aa).

This chain is Unknown protein 6, found in Lonomia obliqua (Moth).